A 465-amino-acid polypeptide reads, in one-letter code: GDNF family receptor alpha-1 (465 aa).

The first 24 residues, 1-24 (MFLATLYFALPLLDLLLSAEVSGG), serve as a signal peptide directing secretion. Repeat copies occupy residues 25–113 (DRLD…LQGN), 150–238 (KGNN…YEER), and 239–342 (EKPN…KNAI). C36 and C42 form a disulfide bridge. N59 carries N-linked (GlcNAc...) asparagine glycosylation. 10 cysteine pairs are disulfide-bonded: C154-C214, C161-C167, C178-C192, C187-C233, C216-C221, C243-C313, C250-C256, C267-C285, C277-C337, and C315-C325. N347 and N406 each carry an N-linked (GlcNAc...) asparagine glycan. The GPI-anchor amidated serine moiety is linked to residue S429. The propeptide at 430–465 (HITTKSMAAPPSCGLSPLLVLVVTALSTLLSLTETS) is removed in mature form.

The protein belongs to the GDNFR family. In terms of assembly, interacts with GDNF ligand and RET: forms a 2:2:2 ternary complex composed of GDNF ligand, GFRA1 and RET receptor. Interacts with SORL1, either alone or in complex with GDNF. Interaction between SORL1 and GFRA1 leads to GFRA1 internalization, but not degradation.

Its subcellular location is the cell membrane. The protein localises to the golgi apparatus. The protein resides in the trans-Golgi network. It is found in the endosome. It localises to the multivesicular body. In terms of biological role, coreceptor for GDNF, a neurotrophic factor that enhances survival and morphological differentiation of dopaminergic neurons and increases their high-affinity dopamine uptake. GDNF-binding leads to autophosphorylation and activation of the RET receptor. This Homo sapiens (Human) protein is GDNF family receptor alpha-1 (GFRA1).